The following is a 103-amino-acid chain: Cyclotide vibi-K (103 aa).

An N-terminal signal peptide occupies residues 1–9 (AAFALPAFA). Positions 10–69 (SFEKDVITPSVLEAVLNRKAPLSNIMMENDAILNVIANVKTVISNPVLEEALLKTNHGVN) are excised as a propeptide. The segment at residues 70 to 99 (GIPCGESCVWIPCLTSAVGCPCKSKVCYRN) is a cross-link (cyclopeptide (Gly-Asn)). Cystine bridges form between cysteine 73–cysteine 89, cysteine 77–cysteine 91, and cysteine 82–cysteine 96. Residues 100–103 (SLDN) constitute a propeptide that is removed on maturation.

This is a cyclic peptide.

Its function is as follows. Probably participates in a plant defense mechanism. The sequence is that of Cyclotide vibi-K from Viola biflora (Yellow wood violet).